We begin with the raw amino-acid sequence, 2334 residues long: MAVASRPCGVATSVLPAKKPLSFFTDLVGKTPPRCIRAPHTLAWPVFADLDNEEESPEICRKCGKYANGFGVFDLTDLGDVCLCSIRPQRHVGGPCCLCNKQYIRACGRYCARVLKHYKAFNKVIPCLHSRQVKPVFEGEVEDLFVELGAPTRMNFTEAELASQGASIMDRFVDLVEPCLSTEDSNFLDNICSDASIRKRLEDEYDVDMIAAARARKDFAKTLKLALQDRERKPDKWYSKLGCITTKGRQWAKKVVHGAKKLSDPLKTLAAILLVALHNCVAVDTTTMLSHFKPVNLLAILLDWTNDLPGFLTTLIRFMELYGVVQSTVNLVVDAIKSFWDRVMCATERCCDLLKRLFDKFEDSVPTGPTAGCLIFMSFVFSVIVGYLPNNSVISTFMKGAGKLTTFAGVIGAIRTLWITINQHMVAKDITSIQEKVMAVVKMANEAATLNQLEIVSVLCSELESTLTNRCTLPSYNQHMGVLNAAQKVVADIHTLVLGKINMTKQRPQPVAVVFKGAPGIGKTYLVHRLAKDLGCPHPSNINFGLDHFDSYTGEDVAIADEFNTSGDERWVELFIQMVNTNPCPLNCDKVENKNKVFSSKYLLCTTNSSMVLNATHPRATAFYRRVIIVDVRNKAVEGWQSTRHGSKPGKHCYTKDMSHLTFQVYPHNMPAPGFVFVGEKLVKSQVAPRELKYNELLDMIKNEHPDANFEGATKHEFVYPDVQYEQALLMWKQYFLMYGCTARLAKVFVDDIPYNQVHVARKSDPRSPGAVHHECELKYIWRMVPHFALGCVNMTNQLGTDLTQSQLDRITCGVEGITVTTVDNILPFHSQNTLINPSFLKLIWALRRHLRGLRGITQVATFIWKVMCNPVCAYDTLIRTLTGAATFSEDPVTTTIVCPNCTIQIHTCGGLLVRYSGDPAPVASDNVDRGNQGIDCLTNPNLIAGFSWRQIADLFSTVMTSLCNNHLVNLATMAAIGAVATKALQGVKGKTKRGRGARINLGNDEYDEWQQMRREFNNAHDMTAEEFLELRNRAAMGSDDADAIKFRSWWTNRQLRQDEAHVTVVGKGGVRNEVIRTRVRNAPKGPRTLDDGGFYDNDYEGLPGYLRFNGSGWMIHIGNGMYLSNTHTARSSCSEIVTCSPTTDLCLVKAEPIRSVAQIAEGTPVRDWKRASITTYGLKKTFSDSTKIDVLAYDGPTQTTHGDCGLPLFDEAGKVVAIHTGKLLGFSKMCTLIDCTITKGVYENTDLFCGDPIDYRGLVAFRVAGVEPRPPVSGTRYAKVPGVPEEYHTGYRPANLGRGDPDSHCTLMNIAVKNLQVYQQEPKLTKVDTFIERAAADVLGFLRFLTKGERQMNLNFSAAFNVLDLSTSCGPFVPGKKIDHVKDGKLDEVLSKHLYKCWSVANSGKALHHVYACGLKDELRPLDKVKEGKKRLLWGCNVGVALCAAAVFHNLCFKLKTVARFGPIAVGIDMTSRDVDVMITQLTSKAGDFLCLDYSKWDSTMSPCVVRLAIDILADCCEQTELTKSVVLTLKSLPMTVLDAMIVPTKRGLPSGMPFTSVINSICHWLLWSAAVYKACDEIGLFCSNLYEDAPFFVYGDDGVYAMTPMMVSLLPAILDNLRDYGLSPTAADKTEFIDVCPLKDISFLKRKFVMSELGWLSQLDRSSILRQLEWTKTAKRHMCIEECSELDKDERGVQLEELQIHAAAHGEEFFELVKKELRRQQAFTRFSVFDYQTARKTLGDRKRIVSVVPDDSFVNVMEGKPRADAPGTATTASVPGTTTDGMDPGVVASTDVVTADNVAASVATAGIGGPPQQASPQESWRVNFFYNDVFTWSVTDAPGSILYTVQHSPQNNPFTQVLSQMYAGWAGGMQFRFIVAGSGIFGGRLVCAIIPPGIQIQPGLEVRQFPHVVIDARSLEPVTITMPDLRPEMYHPTGNPGLVPTLVVSVYNNLINPFGGTTSAIQVTVETRPSEDFEFVLIRAPSSKTVDSVNPSWLLTTPVLTGAGSDNRWGAPIVGLQPVPGGFSTSNRHWNMNGETYGWSSPRFDDIDHPSGNVSYPSGSATNTIETWYANAGTATTNPISNIAPDGFPDMGAIPFSGTTIPTGAWVGFGQVWNASNGTPYVGTVQAYELGFANGAPSSIRPVTTTTGAQLVAKSIYGVAIAQNQTSAGIIFLSKGMVSTPGVAATTYTPQPSAIVTTPGTPVAAPIGKNTPIMFSAVVRRTGDVNAGPGSANGTQYGVGSQPLSVTLGLSLTNYSSALQPGQFFVWQLNFASGFMEVGMNTDGYFYAGTGAYSGMIDLTDLIDVRPVGVRPNTSTLVFNLAGVATTGYSYV.

The SF3 helicase domain occupies glutamine 487 to serine 647. The residue at position 1007 (tyrosine 1007) is an O-(5'-phospho-RNA)-tyrosine. A Peptidase C24 domain is found at glycine 1102–threonine 1237. Active-site for 3CLpro activity residues include histidine 1128, aspartate 1145, and cysteine 1205. The 125-residue stretch at glycine 1488 to leucine 1612 folds into the RdRp catalytic domain. An intrachain disulfide couples cysteine 1577 to cysteine 1584. Positions glutamate 1760–methionine 1784 are disordered. The segment covering alanine 1767 to threonine 1781 has biased composition (low complexity).

Mn(2+) serves as cofactor. Specific enzymatic cleavages by its own cysteine protease yield mature proteins. The protease cleaves itself from the nascent polyprotein autocatalytically. Precursor p41 can be cleaved by viral 3CLpro into protein p19 and VPg, or cleaved by host protease into protein p23/2 and protein p18. Post-translationally, VPg is uridylylated by the polymerase and is covalently attached to the 5'-end of the polyadenylated genomic and subgenomic RNAs. This uridylylated form acts as a nucleotide-peptide primer for the polymerase.

It is found in the virion. Its subcellular location is the host cytoplasm. It carries out the reaction a ribonucleoside 5'-triphosphate + H2O = a ribonucleoside 5'-diphosphate + phosphate + H(+). It catalyses the reaction Endopeptidase with a preference for cleavage when the P1 position is occupied by Glu-|-Xaa and the P1' position is occupied by Gly-|-Yaa.. The catalysed reaction is RNA(n) + a ribonucleoside 5'-triphosphate = RNA(n+1) + diphosphate. Together with NTPase and NS4, initiates the formation of the replication complex. Induces the proliferation of the host smooth ER membranes forming long tubular structures. These remodeled membranes probably form the viral factories that contain the replication complex. Its function is as follows. Displays NTPase activity, but no helicase activity. Induces the formation of convoluted membranes derived from the host ER. These remodeled membranes probably form the viral factories that contain the replication complex. Together with NS2 and NS4, initiates the formation of the replication complex. In terms of biological role, probable key protein responsible for the formation of membrane alterations by the virus. Induces the formation of convoluted membranes derived from the host ER. These remodeled membranes probably form the viral factories that contain the replication complex. Together with NS2 and NTPase, initiates the formation of the replication complex. Functionally, viral genome-linked protein is covalently linked to the 5'-end of the positive-strand, negative-strand genomic RNAs and subgenomic RNA. Acts as a genome-linked replication primer. May recruit ribosome to viral RNA thereby promoting viral proteins translation. Interacts with host translation initiation complex to allow the translation of viral proteins. Processes the polyprotein. 3CLpro-RdRp is first released by autocleavage, then all other proteins are cleaved. May cleave polyadenylate-binding protein thereby inhibiting cellular translation. Its function is as follows. Replicates genomic and antigenomic RNA by recognizing replications specific signals. Also transcribes a subgenomic mRNA by initiating RNA synthesis internally on antigenomic RNA. This sgRNA codes for structural proteins. Catalyzes the covalent attachment VPg with viral RNAs. In terms of biological role, capsid protein VP60 self assembles to form an icosahedral capsid with a T=3 symmetry, about 35 nm in diameter, and consisting of 180 capsid proteins. A smaller form of capsid with a diameter of 23 nm might be capsid proteins assembled as icosahedron with T=1 symmetry. The capsid encapsulate VP2 proteins and genomic or subgenomic RNA. Attaches virion to target cells by binding histo-blood group antigens, inducing endocytosis of the viral particle. Acidification of the endosome induces conformational change of capsid protein thereby injecting virus genomic RNA into host cytoplasm. This is Genome polyprotein from Lepus europaeus (European hare).